The primary structure comprises 775 residues: Dipeptidyl peptidase 4 (775 aa).

The N-terminal stretch at 1–15 (MKLLSLLMLAGIAQA) is a signal peptide. Asparagine 81, asparagine 111, asparagine 170, and asparagine 219 each carry an N-linked (GlcNAc...) asparagine glycan. Catalysis depends on charge relay system residues serine 613, aspartate 690, and histidine 725.

The protein belongs to the peptidase S9B family.

The protein localises to the secreted. It carries out the reaction Release of an N-terminal dipeptide, Xaa-Yaa-|-Zaa-, from a polypeptide, preferentially when Yaa is Pro, provided Zaa is neither Pro nor hydroxyproline.. Functionally, extracellular dipeptidyl-peptidase which removes N-terminal dipeptides sequentially from polypeptides having unsubstituted N-termini provided that the penultimate residue is proline. Contributes to pathogenicity. This is Dipeptidyl peptidase 4 (DPP4) from Trichophyton tonsurans (Scalp ringworm fungus).